The sequence spans 314 residues: DNA-directed RNA polymerase subunit alpha (314 aa).

Residues 1 to 228 (MIEIEKPKIE…EHLNIFVGLT (228 aa)) are alpha N-terminal domain (alpha-NTD). The segment at 246–314 (EKVLEMTIEE…ELGLGLRKDD (69 aa)) is alpha C-terminal domain (alpha-CTD).

This sequence belongs to the RNA polymerase alpha chain family. Homodimer. The RNAP catalytic core consists of 2 alpha, 1 beta, 1 beta' and 1 omega subunit. When a sigma factor is associated with the core the holoenzyme is formed, which can initiate transcription.

It carries out the reaction RNA(n) + a ribonucleoside 5'-triphosphate = RNA(n+1) + diphosphate. Functionally, DNA-dependent RNA polymerase catalyzes the transcription of DNA into RNA using the four ribonucleoside triphosphates as substrates. The polypeptide is DNA-directed RNA polymerase subunit alpha (Bacillus pumilus (strain SAFR-032)).